The following is a 166-amino-acid chain: MKFALVLLGVCAFYLVNATGDLETELEASELQELQEALDLIGETPLESLEAEELEEARKFKWGKLFSTAKKLYKKGKKLSKNKNFKKALKFGKQLAKNLQAGEEHEPGTPVGNNKCWAIGTTCSDDCDCCPEHHCHCPAGKWLPGLFRCTCQVTESDKVNKCPPAE.

The signal sequence occupies residues 1 to 18; sequence MKFALVLLGVCAFYLVNA. The propeptide occupies 19 to 58; sequence TGDLETELEASELQELQEALDLIGETPLESLEAEELEEAR. The linear cationic cytotoxin domain stretch occupies residues 59-99; it reads KFKWGKLFSTAKKLYKKGKKLSKNKNFKKALKFGKQLAKNL. The Oxytoxin-type inhibitor cystine knot (ICK) domain occupies 113–166; it reads NNKCWAIGTTCSDDCDCCPEHHCHCPAGKWLPGLFRCTCQVTESDKVNKCPPAE. Disulfide bonds link Cys-116–Cys-130, Cys-123–Cys-135, Cys-127–Cys-162, Cys-129–Cys-151, and Cys-137–Cys-149.

The protein belongs to the spiderine family. Cationic/spiderine subfamily. As to expression, expressed by the venom gland.

It localises to the secreted. Has antimicrobial, insecticidal, cytolytic and cytotoxic activity. Active against E.coli DH5alpha, E.faecalis VKM B 871, B.subtilis VKM B 501, A.globiformis VKM Ac 1112, P.aeruginosa PAO1 and S.aureus 209P in submicromolar or low micromolar ranges. Lyses human erythrocytes. Kills HeLA and A549 cells. In Oxyopes takobius (Lynx spider), this protein is Spiderine-1a.